The following is a 937-amino-acid chain: Lysosomal alpha-glucosidase (937 aa).

A signal peptide spans 1–23 (MMRWPPCSRPLLGVCTLLSLALL). Positions 24-60 (GHILLHDLEVVPRELRGFSQDEIHQACQPGASSPECR) are excised as a propeptide. Residues 68–118 (TQCDLPPNSRFDCAPDKGITPQQCEARGCCYMPAEWPPDAQMGQPWCFFPP) enclose the P-type domain. 3 disulfides stabilise this stretch: Cys-70–Cys-97, Cys-80–Cys-96, and Cys-91–Cys-114. N-linked (GlcNAc...) asparagine glycans are attached at residues Asn-127, Asn-220, Asn-259, and Asn-377. Asp-391 lines the substrate pocket. Asn-457 carries an N-linked (GlcNAc...) asparagine glycan. Asp-505 functions as the Nucleophile in the catalytic mechanism. Glu-508 is an active-site residue. Cys-520 and Cys-545 form a disulfide bridge. Substrate is bound by residues Arg-587 and Asp-603. Cys-634 and Cys-645 are joined by a disulfide. The N-linked (GlcNAc...) asparagine glycan is linked to Asn-639. His-661 provides a ligand contact to substrate. Asn-867, Asn-888, and Asn-910 each carry an N-linked (GlcNAc...) asparagine glycan.

This sequence belongs to the glycosyl hydrolase 31 family.

Its subcellular location is the lysosome. It is found in the lysosome membrane. It catalyses the reaction Hydrolysis of terminal, non-reducing (1-&gt;4)-linked alpha-D-glucose residues with release of alpha-D-glucose.. Functionally, essential for the degradation of glycogen in lysosomes. Has highest activity on alpha-1,4-linked glycosidic linkages, but can also hydrolyze alpha-1,6-linked glucans. This chain is Lysosomal alpha-glucosidase (GAA), found in Bos taurus (Bovine).